A 209-amino-acid chain; its full sequence is uncharacterized protein (209 aa).

The protein localises to the plastid. It is found in the chloroplast. This is an uncharacterized protein from Porphyra purpurea (Red seaweed).